The primary structure comprises 713 residues: NAD(+) hydrolase SARM1 (713 aa).

One copy of the ARM 1 repeat lies at 53–96; that stretch reads DVQAVLDGSLPALRSAIRTLRSSKDTGDLEETRRAIAETFQLVE. NAD(+) is bound by residues W99, R106, 145-153, and 186-189; these read EQILVSENR and HMFK. ARM repeat units follow at residues 110–149, 151–189, 192–231, 233–276, 277–310, 311–350, and 355–398; these read EEICNRIRLDGGLELLLQLMQTPAVEITYESAKLLEQILV, ENRDYVARMGLGVILNLTREQEDAQLARSVSGILEHMFK, EETSAQLITNGALDTILYWCRGTDPTVLRHCAVALSNCAM, GGHR…LAAN, REMEKEVVKSGTLELVEPFIASLDPDEFARNMLD, SADSMQGRTAADLQHLLPLLDGTRLEGKCIAAFYLCVETS, and QRNT…EEVP. SAM domains follow at residues 408 to 472 and 478 to 537; these read WKSG…LKTY and CDPN…ILSA. The region spanning 552–695 is the TIR domain; that stretch reads KGPDVFISYR…KILRFLEGCP (144 aa). Residues 561-562 and E591 each bind NAD(+); that span reads RR. Residue E634 is part of the active site.

Belongs to the SARM1 family. Homooctamer; forms an octameric ring via SAM domains.

The protein localises to the cytoplasm. The protein resides in the cell projection. It is found in the axon. It localises to the dendrite. Its subcellular location is the synapse. The protein localises to the mitochondrion. It carries out the reaction NAD(+) + H2O = ADP-D-ribose + nicotinamide + H(+). The enzyme catalyses NAD(+) = cyclic ADP-beta-D-ribose + nicotinamide + H(+). It catalyses the reaction NADP(+) + H2O = ADP-D-ribose 2'-phosphate + nicotinamide + H(+). With respect to regulation, autoinhibited: in the inactive state, the enzymatic TIR domain is held apart by the autoinhibiting ARM repeats. NAD(+)-binding to ARM repeats maintains an inactive state by promoting interaction between ARM repeats and the TIR domain, thereby facilitating inhibition of the enzymatic TIR domain. Following activation, possibly by nicotinamide mononucleotide (NMN), auto-inhibitory interactions are released, allowing self-association of the TIR domains and subsequent activation of the NAD(+) hydrolase (NADase) activity. Self-association of TIR domains is facilitated by the octamer of SAM domains. Functionally, NAD(+) hydrolase, which plays a key role in axonal degeneration following injury by regulating NAD(+) metabolism. Acts as a negative regulator of MYD88- and TRIF-dependent toll-like receptor signaling pathway by promoting Wallerian degeneration, an injury-induced form of programmed subcellular death which involves degeneration of an axon distal to the injury site. Wallerian degeneration is triggerred by NAD(+) depletion: in response to injury, SARM1 is activated and catalyzes cleavage of NAD(+) into ADP-D-ribose (ADPR), cyclic ADPR (cADPR) and nicotinamide; NAD(+) cleavage promoting cytoskeletal degradation and axon destruction. Also able to hydrolyze NADP(+), but not other NAD(+)-related molecules. Can activate neuronal cell death in response to stress. The protein is NAD(+) hydrolase SARM1 of Danio rerio (Zebrafish).